Here is a 31-residue protein sequence, read N- to C-terminus: MESVAYILVLTMALAVLFFAIAFREPPRIEK.

Methionine 1 is subject to N-formylmethionine. A helical membrane pass occupies residues 3–23 (SVAYILVLTMALAVLFFAIAF).

The protein belongs to the PsbT family. In terms of assembly, PSII is composed of 1 copy each of membrane proteins PsbA, PsbB, PsbC, PsbD, PsbE, PsbF, PsbH, PsbI, PsbJ, PsbK, PsbL, PsbM, PsbT, PsbX, PsbY, PsbZ, Psb30/Ycf12, peripheral proteins PsbO, CyanoQ (PsbQ), PsbU, PsbV and a large number of cofactors. It forms dimeric complexes.

It localises to the cellular thylakoid membrane. Found at the monomer-monomer interface of the photosystem II (PS II) dimer, plays a role in assembly and dimerization of PSII. PSII is a light-driven water plastoquinone oxidoreductase, using light energy to abstract electrons from H(2)O, generating a proton gradient subsequently used for ATP formation. This chain is Photosystem II reaction center protein T, found in Synechocystis sp. (strain ATCC 27184 / PCC 6803 / Kazusa).